Reading from the N-terminus, the 506-residue chain is Gallate 1-beta-glucosyltransferase 84A23 (506 aa).

His20 serves as the catalytic Proton acceptor. His20 serves as a coordination point for an anthocyanidin. UDP-alpha-D-glucose is bound by residues Gln345, His360, Trp363, Asn364, Ser365, and Glu368. An anthocyanidin is bound at residue Gly383. Residues Asp384 and Gln385 each coordinate UDP-alpha-D-glucose.

The protein belongs to the UDP-glycosyltransferase family. Expressed in roots of the seedlings.

Its subcellular location is the cytoplasm. The catalysed reaction is 3,4,5-trihydroxybenzoate + UDP-alpha-D-glucose = 1-O-galloyl-beta-D-glucose + UDP. It carries out the reaction 3,4-dihydroxybenzoate + UDP-alpha-D-glucose = 1-O-(3,4-dihydroxy-benzoyl)-beta-D-glucose + UDP. The enzyme catalyses 4-hydroxybenzoate + UDP-alpha-D-glucose = 4-(beta-D-glucosyloxy)benzoate + UDP + H(+). It catalyses the reaction (E)-cinnamate + UDP-alpha-D-glucose = 1-O-(trans-cinnamoyl)-beta-D-glucose + UDP. The catalysed reaction is (E)-sinapate + UDP-alpha-D-glucose = 1-O-(trans-sinapoyl)-beta-D-glucose + UDP. It carries out the reaction (E)-4-coumarate + UDP-alpha-D-glucose = 1-O-(trans-4-coumaroyl)-beta-D-glucose + UDP. The enzyme catalyses (E)-caffeate + UDP-alpha-D-glucose = 1-O-[(E)-caffeoyl]-beta-D-glucose + UDP. It catalyses the reaction (E)-ferulate + UDP-alpha-D-glucose = 1-O-[(E)-feruloyl]-beta-D-glucose + UDP. The catalysed reaction is genistein + UDP-alpha-D-glucose = genistein 7-O-beta-D-glucoside + UDP + H(+). It carries out the reaction apigenin + UDP-alpha-D-glucose = apigenin 7-O-beta-D-glucoside + UDP + H(+). The enzyme catalyses luteolin + UDP-alpha-D-glucose = luteolin 7-O-beta-D-glucoside + UDP + H(+). Its function is as follows. Glucosyltransferase that catalyzes the formation of 1-O-beta-D-glucose esters with hydroxybenzoic acids and cinnamic acid including its derivatives as preferred glucosyl acceptors. Has significant activity with gallic acid (3,4,5-trihydroxybenzoic acid), 3,4-dihydroxybenzoic acid, 4-hydroxybenzoic acid, cinnamic acid, sinapic acid, coumaric acid, caffeic acid and ferulic acid in vitro. Gallic acid is the predicted native substrate of the enzyme, which thus catalyzes the formation of 1-O-galloyl-beta-D-glucose, the first committed step of hydrolyzable tannins (HTs) biosynthesis, with punicalagin isomers being the major HTs of pomegranate. Catalyzes the formation of flavonoid glucosides with genistein, apigenin and luteolin in vitro. Has low activity with benzoic acid, 2-hydroxybenzoic acid, 3-hydroxybenzoic acid, 2,4-dihydroxybenzoic acid, naringenin and quercetin. No activity with catechol, resveratrol, chlorogenic acid, catechin and epicatechin (building blocks of proanthocyanidins) or cyanidin, delphinidin and pelargonidin (the three anthocyanidins). The sequence is that of Gallate 1-beta-glucosyltransferase 84A23 from Punica granatum (Pomegranate).